The chain runs to 613 residues: Ribosome-associated molecular chaperone SSB1 (613 aa).

The tract at residues 1 to 391 (MAEGVFPGAI…ILTGQSTSDE (391 aa)) is nucleotide binding domain (NBD). ATP-binding positions include 16 to 18 (TTY), Lys73, 205 to 207 (GGT), 271 to 278 (ERAKRTLS), and Gly342. The interval 392-402 (TKDLLLLDVAP) is inter-domain linker. Residues 403–613 (LSLGVGMAGD…RAVTKAMSTR (211 aa)) are substrate binding domain (SBD). The lid domain (SBDalpha) stretch occupies residues 516–612 (SEEIEQMVNQ…KRAVTKAMST (97 aa)). Positions 574–582 (VEAALADAF) match the Nuclear export signal motif.

This sequence belongs to the heat shock protein 70 family. Ssb-type Hsp70 subfamily. As to quaternary structure, binds to ribosomes. Binds close to the ribosomal tunnel exit via contacts with both ribosomal proteins and rRNA. Directly interacts with nascent polypeptides. This interaction is dependent on the ribosome-associated complex (RAC). Interacts with SSE1. Interacts with FES1.

The protein localises to the cytoplasm. It carries out the reaction ATP + H2O = ADP + phosphate + H(+). Its function is as follows. Ribosome-bound, Hsp70-type chaperone that assists in the cotranslational folding of newly synthesized proteins in the cytosol. Stimulates folding by interacting with nascent chains, binding to short, largely hydrophobic sequences exposed by unfolded proteins, thereby stabilizing longer, more slowly translated, and aggregation-prone nascent polypeptides and domains that cannot fold stably until fully synthesized. The Hsp70-protein substrate interaction depends on ATP-binding and on allosteric regulation between the NBD and the SBD. The ATP-bound state is characterized by a fast exchange rate of substrate (low affinity state), while in the ADP-bound state exchange is much slower (high affinity state). During the Hsp70 cycle, the chaperone switches between the ATP-bound state (open conformation) and the ADP-bound state (closed conformation) by major conformational rearrangements involving mainly the lid domain. Ssb cooperates with a specific Hsp40/Hsp70 co-chaperone termed the ribosome-associated complex (RAC), which stimulates the ATPase activity of the ribosome-associated pool of Ssbs and switches it to the high affinity substrate binding state. Hsp110 chaperone SSE1 and FES1 act as nucleotide exchange factors that cause substrate release. The protein is Ribosome-associated molecular chaperone SSB1 (SSB1) of Kluyveromyces marxianus (Yeast).